The chain runs to 223 residues: uncharacterized protein (223 aa).

4 helical membrane-spanning segments follow: residues 22-42 (LTVGLFVITFFNPGANLFVVV), 59-79 (GVALGDAFYSGLGLFGLATLI), 85-105 (IFSLIRIVGGAYLLWFAWCSM), and 164-184 (MAWAGIVLASIIWRVFLSQAF).

The protein belongs to the Rht family.

The protein resides in the cell membrane. This is an uncharacterized protein from Escherichia coli (strain K12).